The sequence spans 758 residues: Xaa-Pro dipeptidyl-peptidase (758 aa).

Catalysis depends on charge relay system residues serine 349, aspartate 469, and histidine 499.

This sequence belongs to the peptidase S15 family. As to quaternary structure, homodimer.

It localises to the cytoplasm. The enzyme catalyses Hydrolyzes Xaa-Pro-|- bonds to release unblocked, N-terminal dipeptides from substrates including Ala-Pro-|-p-nitroanilide and (sequentially) Tyr-Pro-|-Phe-Pro-|-Gly-Pro-|-Ile.. Functionally, removes N-terminal dipeptides sequentially from polypeptides having unsubstituted N-termini provided that the penultimate residue is proline. This Streptococcus uberis (strain ATCC BAA-854 / 0140J) protein is Xaa-Pro dipeptidyl-peptidase.